Consider the following 501-residue polypeptide: ATP synthase subunit alpha (501 aa).

Residue 169 to 176 coordinates ATP; it reads GDRQTGKT.

It belongs to the ATPase alpha/beta chains family. F-type ATPases have 2 components, CF(1) - the catalytic core - and CF(0) - the membrane proton channel. CF(1) has five subunits: alpha(3), beta(3), gamma(1), delta(1), epsilon(1). CF(0) has three main subunits: a(1), b(2) and c(9-12). The alpha and beta chains form an alternating ring which encloses part of the gamma chain. CF(1) is attached to CF(0) by a central stalk formed by the gamma and epsilon chains, while a peripheral stalk is formed by the delta and b chains.

It localises to the cell membrane. The catalysed reaction is ATP + H2O + 4 H(+)(in) = ADP + phosphate + 5 H(+)(out). In terms of biological role, produces ATP from ADP in the presence of a proton gradient across the membrane. The alpha chain is a regulatory subunit. This chain is ATP synthase subunit alpha, found in Streptococcus uberis (strain ATCC BAA-854 / 0140J).